The chain runs to 211 residues: Probable endo-1,4-beta-xylanase 5 (211 aa).

Positions 1–16 (MKVTAAFASLLLTAFA) are cleaved as a signal peptide. Residues 19-210 (APEPVLVSRS…GAGSASVTIS (192 aa)) form the GH11 domain. Glutamate 106 acts as the Nucleophile in catalysis. Glutamate 197 serves as the catalytic Proton donor.

This sequence belongs to the glycosyl hydrolase 11 (cellulase G) family.

The protein resides in the secreted. It carries out the reaction Endohydrolysis of (1-&gt;4)-beta-D-xylosidic linkages in xylans.. Its pathway is glycan degradation; xylan degradation. Endo-1,4-beta-xylanase involved in the hydrolysis of xylan, a major structural heterogeneous polysaccharide found in plant biomass representing the second most abundant polysaccharide in the biosphere, after cellulose. This chain is Probable endo-1,4-beta-xylanase 5 (XYN5), found in Aspergillus niger (strain ATCC MYA-4892 / CBS 513.88 / FGSC A1513).